The sequence spans 535 residues: T-complex protein 1 subunit zeta 1 (535 aa).

The protein belongs to the TCP-1 chaperonin family. In terms of assembly, heterooligomeric complex of about 850 to 900 kDa that forms two stacked rings, 12 to 16 nm in diameter.

It localises to the cytoplasm. Functionally, molecular chaperone; assists the folding of proteins upon ATP hydrolysis. Known to play a role, in vitro, in the folding of actin and tubulin. In Arabidopsis thaliana (Mouse-ear cress), this protein is T-complex protein 1 subunit zeta 1.